We begin with the raw amino-acid sequence, 511 residues long: Coatomer subunit delta (511 aa).

A compositionally biased stretch (basic and acidic residues) spans 168–177; that stretch reads QARRDAERQG. The interval 168-188 is disordered; it reads QARRDAERQGKKAPGFGGFGS. Phosphoserine is present on Ser223. N6-acetyllysine occurs at positions 233 and 241. Ser244 is modified (phosphoserine). In terms of domain architecture, MHD spans 271 to 511; that stretch reads MESVHMKIEE…TFLVDKYEIL (241 aa). Lys309 and Lys351 each carry N6-acetyllysine. A Phosphoserine modification is found at Ser493.

It belongs to the adaptor complexes medium subunit family. Delta-COP subfamily. In terms of assembly, oligomeric complex that consists of at least the alpha, beta, beta', gamma, delta, epsilon and zeta subunits.

The protein localises to the cytoplasm. It localises to the golgi apparatus membrane. The protein resides in the cytoplasmic vesicle. It is found in the COPI-coated vesicle membrane. The coatomer is a cytosolic protein complex that binds to dilysine motifs and reversibly associates with Golgi non-clathrin-coated vesicles, which further mediate biosynthetic protein transport from the ER, via the Golgi up to the trans Golgi network. Coatomer complex is required for budding from Golgi membranes, and is essential for the retrograde Golgi-to-ER transport of dilysine-tagged proteins. In mammals, the coatomer can only be recruited by membranes associated to ADP-ribosylation factors (ARFs), which are small GTP-binding proteins; the complex also influences the Golgi structural integrity, as well as the processing, activity, and endocytic recycling of LDL receptors. The polypeptide is Coatomer subunit delta (Arcn1) (Rattus norvegicus (Rat)).